An 87-amino-acid chain; its full sequence is Small ribosomal subunit protein bS20 (87 aa).

Residues 1–27 (MANSVQATKRARQAEKHRQHNAGMRAA) are disordered. A compositionally biased stretch (basic residues) spans 9–20 (KRARQAEKHRQH).

This sequence belongs to the bacterial ribosomal protein bS20 family.

In terms of biological role, binds directly to 16S ribosomal RNA. The chain is Small ribosomal subunit protein bS20 from Hydrogenovibrio crunogenus (strain DSM 25203 / XCL-2) (Thiomicrospira crunogena).